Reading from the N-terminus, the 719-residue chain is Plasmin and fibronectin-binding protein A (719 aa).

The signal sequence occupies residues 1-45 (MLKIVKKLEVLMKYFVPNEVFSIRKLKVGTCSVLLAISILGSQGI). Disordered regions lie at residues 56 to 76 (PMAT…SPTV) and 109 to 128 (IRSN…TSTN). PbH1 repeat units follow at residues 287 to 310 (SNNV…QIAG), 362 to 384 (SENV…LVTA), 397 to 419 (PSNI…RFTG), 497 to 523 (VSDI…ELLR), and 525 to 546 (SDNL…VIED). A coiled-coil region spans residues 601–658 (NNLSDKNEKEKNKEEKQSNSNNVIDSNQKNGEFNSSKDNRQMNDKIDNKQDNKTEEVN). A compositionally biased stretch (basic and acidic residues) spans 606-617 (KNEKEKNKEEKQ). The tract at residues 606–655 (KNEKEKNKEEKQSNSNNVIDSNQKNGEFNSSKDNRQMNDKIDNKQDNKTE) is disordered. A compositionally biased stretch (polar residues) spans 623 to 634 (VIDSNQKNGEFN). Residues 635–655 (SSKDNRQMNDKIDNKQDNKTE) show a composition bias toward basic and acidic residues. An LPXTG sorting signal motif is present at residues 685 to 689 (LPKTG). T688 is modified (pentaglycyl murein peptidoglycan amidated threonine). Positions 689–719 (GSNKIMELFLTVTGIGLLLTLKGLKYYGKDK) are cleaved as a propeptide — removed by sortase.

It is found in the secreted. The protein localises to the cell wall. Functionally, acts as a fibronectin-dependent adhesin and invasin. Binds host (in this case human) fibronectin, plasmin, plasminogen, and human serum albumin. Where the bacteria adhere to human cells there is major recruitment of microvilli which seem to fuse to cover the streptococcal chains. Antibodies to this protein reduce bacterial growth in human blood. The chain is Plasmin and fibronectin-binding protein A (pfbA) from Streptococcus pneumoniae (strain ATCC BAA-255 / R6).